We begin with the raw amino-acid sequence, 420 residues long: UDP-N-acetylglucosamine 1-carboxyvinyltransferase (420 aa).

22 to 23 (KN) contacts phosphoenolpyruvate. R93 contacts UDP-N-acetyl-alpha-D-glucosamine. C117 serves as the catalytic Proton donor. At C117 the chain carries 2-(S-cysteinyl)pyruvic acid O-phosphothioketal. UDP-N-acetyl-alpha-D-glucosamine is bound by residues D306 and I328.

The protein belongs to the EPSP synthase family. MurA subfamily.

The protein localises to the cytoplasm. The enzyme catalyses phosphoenolpyruvate + UDP-N-acetyl-alpha-D-glucosamine = UDP-N-acetyl-3-O-(1-carboxyvinyl)-alpha-D-glucosamine + phosphate. It participates in cell wall biogenesis; peptidoglycan biosynthesis. Cell wall formation. Adds enolpyruvyl to UDP-N-acetylglucosamine. This Colwellia psychrerythraea (strain 34H / ATCC BAA-681) (Vibrio psychroerythus) protein is UDP-N-acetylglucosamine 1-carboxyvinyltransferase.